Here is a 500-residue protein sequence, read N- to C-terminus: L-arabinose isomerase (500 aa).

The Mn(2+) site is built by Glu-306, Glu-333, His-350, and His-450.

It belongs to the arabinose isomerase family. As to quaternary structure, homohexamer. Mn(2+) serves as cofactor.

The catalysed reaction is beta-L-arabinopyranose = L-ribulose. It participates in carbohydrate degradation; L-arabinose degradation via L-ribulose; D-xylulose 5-phosphate from L-arabinose (bacterial route): step 1/3. Functionally, catalyzes the conversion of L-arabinose to L-ribulose. The chain is L-arabinose isomerase from Escherichia coli O17:K52:H18 (strain UMN026 / ExPEC).